We begin with the raw amino-acid sequence, 957 residues long: Glycine dehydrogenase (decarboxylating) (957 aa).

Position 708 is an N6-(pyridoxal phosphate)lysine (Lys-708).

Belongs to the GcvP family. As to quaternary structure, the glycine cleavage system is composed of four proteins: P, T, L and H. It depends on pyridoxal 5'-phosphate as a cofactor.

The enzyme catalyses N(6)-[(R)-lipoyl]-L-lysyl-[glycine-cleavage complex H protein] + glycine + H(+) = N(6)-[(R)-S(8)-aminomethyldihydrolipoyl]-L-lysyl-[glycine-cleavage complex H protein] + CO2. In terms of biological role, the glycine cleavage system catalyzes the degradation of glycine. The P protein binds the alpha-amino group of glycine through its pyridoxal phosphate cofactor; CO(2) is released and the remaining methylamine moiety is then transferred to the lipoamide cofactor of the H protein. This chain is Glycine dehydrogenase (decarboxylating), found in Salmonella typhi.